The primary structure comprises 258 residues: Caffeoyl-CoA O-methyltransferase 1 (258 aa).

Residues 1-16 (MATTATEAAPAQEQQA) show a composition bias toward low complexity. Residues 1–31 (MATTATEAAPAQEQQANGNGEQKTRHSEVGH) form a disordered region. Residues 22-31 (QKTRHSEVGH) show a composition bias toward basic and acidic residues. Substrate is bound at residue Lys-32. S-adenosyl-L-methionine is bound by residues Thr-74, Glu-96, 98-99 (GV), Ser-104, Asp-122, and Ala-151. Asp-174 lines the substrate pocket. Asp-174 lines the a divalent metal cation pocket. Asp-176 provides a ligand contact to S-adenosyl-L-methionine. A divalent metal cation is bound by residues Asp-200 and Asn-201. A substrate-binding site is contributed by Asn-205.

This sequence belongs to the class I-like SAM-binding methyltransferase superfamily. Cation-dependent O-methyltransferase family. CCoAMT subfamily. A divalent metal cation serves as cofactor.

The enzyme catalyses (E)-caffeoyl-CoA + S-adenosyl-L-methionine = (E)-feruloyl-CoA + S-adenosyl-L-homocysteine + H(+). The protein operates within aromatic compound metabolism; phenylpropanoid biosynthesis. Methylates caffeoyl-CoA to feruloyl-CoA and 5-hydroxyferuloyl-CoA to sinapoyl-CoA. Plays a role in the synthesis of feruloylated polysaccharides. Involved in the reinforcement of the plant cell wall. Also involved in the responding to wounding or pathogen challenge by the increased formation of cell wall-bound ferulic acid polymers. The polypeptide is Caffeoyl-CoA O-methyltransferase 1 (CCOAOMT1) (Zea mays (Maize)).